Consider the following 228-residue polypeptide: Octanoyltransferase (228 aa).

In terms of domain architecture, BPL/LPL catalytic spans 31–212 (EETDGILILL…KFEEVFEIKF (182 aa)). Residues 76 to 83 (RGGKITFH), 143 to 145 (AIG), and 156 to 158 (GIA) contribute to the substrate site. C174 acts as the Acyl-thioester intermediate in catalysis.

The protein belongs to the LipB family.

The protein localises to the cytoplasm. It carries out the reaction octanoyl-[ACP] + L-lysyl-[protein] = N(6)-octanoyl-L-lysyl-[protein] + holo-[ACP] + H(+). The protein operates within protein modification; protein lipoylation via endogenous pathway; protein N(6)-(lipoyl)lysine from octanoyl-[acyl-carrier-protein]: step 1/2. Catalyzes the transfer of endogenously produced octanoic acid from octanoyl-acyl-carrier-protein onto the lipoyl domains of lipoate-dependent enzymes. Lipoyl-ACP can also act as a substrate although octanoyl-ACP is likely to be the physiological substrate. In Caldanaerobacter subterraneus subsp. tengcongensis (strain DSM 15242 / JCM 11007 / NBRC 100824 / MB4) (Thermoanaerobacter tengcongensis), this protein is Octanoyltransferase.